Here is a 311-residue protein sequence, read N- to C-terminus: tRNA(Ile)-lysidine synthase (311 aa).

An ATP-binding site is contributed by 32 to 37 (SGGPDS).

Belongs to the tRNA(Ile)-lysidine synthase family.

The protein resides in the cytoplasm. It carries out the reaction cytidine(34) in tRNA(Ile2) + L-lysine + ATP = lysidine(34) in tRNA(Ile2) + AMP + diphosphate + H(+). In terms of biological role, ligates lysine onto the cytidine present at position 34 of the AUA codon-specific tRNA(Ile) that contains the anticodon CAU, in an ATP-dependent manner. Cytidine is converted to lysidine, thus changing the amino acid specificity of the tRNA from methionine to isoleucine. The chain is tRNA(Ile)-lysidine synthase from Cutibacterium acnes (strain DSM 16379 / KPA171202) (Propionibacterium acnes).